The primary structure comprises 200 residues: ATP synthase subunit b (200 aa).

Residues 12-32 (ILSGLAVAVAILVPVLALASG) form a helical membrane-spanning segment.

This sequence belongs to the ATPase B chain family. F-type ATPases have 2 components, F(1) - the catalytic core - and F(0) - the membrane proton channel. F(1) has five subunits: alpha(3), beta(3), gamma(1), delta(1), epsilon(1). F(0) has three main subunits: a(1), b(2) and c(10-14). The alpha and beta chains form an alternating ring which encloses part of the gamma chain. F(1) is attached to F(0) by a central stalk formed by the gamma and epsilon chains, while a peripheral stalk is formed by the delta and b chains.

Its subcellular location is the cell inner membrane. F(1)F(0) ATP synthase produces ATP from ADP in the presence of a proton or sodium gradient. F-type ATPases consist of two structural domains, F(1) containing the extramembraneous catalytic core and F(0) containing the membrane proton channel, linked together by a central stalk and a peripheral stalk. During catalysis, ATP synthesis in the catalytic domain of F(1) is coupled via a rotary mechanism of the central stalk subunits to proton translocation. Functionally, component of the F(0) channel, it forms part of the peripheral stalk, linking F(1) to F(0). The chain is ATP synthase subunit b from Trichlorobacter lovleyi (strain ATCC BAA-1151 / DSM 17278 / SZ) (Geobacter lovleyi).